Here is a 676-residue protein sequence, read N- to C-terminus: Pescadillo homolog (676 aa).

Positions 298–327 (IAAMADDEDEQEVEMAEADAEDDDEEENTE) form a coiled coil. Disordered regions lie at residues 298 to 338 (IAAM…TAPD), 413 to 439 (PLAN…STKP), 478 to 502 (VKPK…EAEA), and 515 to 676 (EVDD…AERA). Over residues 302–327 (ADDEDEQEVEMAEADAEDDDEEENTE) the composition is skewed to acidic residues. The region spanning 351–466 (EIASLFAPFT…KLLRPDLYAP (116 aa)) is the BRCT domain. Low complexity predominate over residues 415–427 (ANGASAAGAEDAA). Acidic residues-rich tracts occupy residues 515-524 (EVDDDEDMDA), 539-557 (DVAD…DAEG), and 565-577 (FDDE…DISE). Residues 568–676 (ESEAESDISE…EKAKAAAERA (109 aa)) are a coiled coil. Composition is skewed to basic and acidic residues over residues 579–608 (EAAR…KKEQ), 620–631 (KRAEEEERDRQK), 643–659 (KRIE…SENL), and 666–676 (LEKAKAAAERA).

It belongs to the pescadillo family. As to quaternary structure, component of the NOP7 complex, composed of ERB1, NOP7 and YTM1. The complex is held together by ERB1, which interacts with NOP7 via its N-terminal domain and with YTM1 via a high-affinity interaction between the seven-bladed beta-propeller domains of the 2 proteins. The NOP7 complex associates with the 66S pre-ribosome.

The protein resides in the nucleus. It localises to the nucleolus. Its subcellular location is the nucleoplasm. Functionally, component of the NOP7 complex, which is required for maturation of the 25S and 5.8S ribosomal RNAs and formation of the 60S ribosome. In Phaeosphaeria nodorum (strain SN15 / ATCC MYA-4574 / FGSC 10173) (Glume blotch fungus), this protein is Pescadillo homolog.